A 618-amino-acid polypeptide reads, in one-letter code: Chaperone protein HscA homolog (618 aa).

The protein belongs to the heat shock protein 70 family.

In terms of biological role, chaperone involved in the maturation of iron-sulfur cluster-containing proteins. Has a low intrinsic ATPase activity which is markedly stimulated by HscB. In Methylibium petroleiphilum (strain ATCC BAA-1232 / LMG 22953 / PM1), this protein is Chaperone protein HscA homolog.